Consider the following 63-residue polypeptide: Metallothionein-1 (63 aa).

Repeats lie at residues C23–K30 and C56–K63.

Belongs to the metallothionein superfamily. Type 9 family.

Its function is as follows. The metallothioneins are involved in the cellular sequestration of toxic metal ions. The protein is Metallothionein-1 (MT-I) of Candida glabrata (strain ATCC 2001 / BCRC 20586 / JCM 3761 / NBRC 0622 / NRRL Y-65 / CBS 138) (Yeast).